An 83-amino-acid polypeptide reads, in one-letter code: Sec-independent protein translocase protein TatA (83 aa).

A helical membrane pass occupies residues 1 to 21 (MGNMGIWQLLIIAVIVILLFG). 2 stretches are compositionally biased toward basic and acidic residues: residues 47 to 57 (EEKKALEETAS) and 71 to 83 (AEKKTETKDKEQV). Residues 47–83 (EEKKALEETASEKATPSVEKTAPNAEKKTETKDKEQV) form a disordered region.

Belongs to the TatA/E family. As to quaternary structure, the Tat system comprises two distinct complexes: a TatABC complex, containing multiple copies of TatA, TatB and TatC subunits, and a separate TatA complex, containing only TatA subunits. Substrates initially bind to the TatABC complex, which probably triggers association of the separate TatA complex to form the active translocon.

The protein resides in the cell inner membrane. Part of the twin-arginine translocation (Tat) system that transports large folded proteins containing a characteristic twin-arginine motif in their signal peptide across membranes. TatA could form the protein-conducting channel of the Tat system. The polypeptide is Sec-independent protein translocase protein TatA (Shewanella woodyi (strain ATCC 51908 / MS32)).